Here is an 88-residue protein sequence, read N- to C-terminus: Small ribosomal subunit protein bS20 (88 aa).

Belongs to the bacterial ribosomal protein bS20 family.

Functionally, binds directly to 16S ribosomal RNA. The polypeptide is Small ribosomal subunit protein bS20 (Rhodopseudomonas palustris (strain BisA53)).